Here is a 559-residue protein sequence, read N- to C-terminus: 3-phosphoinositide-dependent protein kinase 1 (559 aa).

At tyrosine 9 the chain carries Phosphotyrosine; by SRC and INSR. At serine 25 the chain carries Phosphoserine. The disordered stretch occupies residues 25–83 (SPSMVRSQTEPSSSPGIPSGVSRQGSTMDGTTAEARPSTNPLQQHPAQLPPQPRKKRPE). Positions 35–46 (PSSSPGIPSGVS) are enriched in low complexity. The 261-residue stretch at 85–345 (FKFGKILGEG…YGPLKAHPFF (261 aa)) folds into the Protein kinase domain. ATP is bound by residues 95-97 (SFS) and lysine 114. Positions 116–160 (LEKRHIIKENKVPYVTRERDVMSRLDHPFFVKLYFTFQDDEKLYF) are PIF-pocket. Residues 163–165 (SYA) and glutamate 169 contribute to the ATP site. The active-site Proton acceptor is aspartate 208. ATP-binding residues include glutamate 212 and aspartate 226. At serine 244 the chain carries Phosphoserine. Lysine 307 bears the N6-acetyllysine mark. Threonine 357 bears the Phosphothreonine; by MELK mark. Tyrosine 376 and tyrosine 379 each carry phosphotyrosine; by SRC and INSR. Serine 396 is modified (phosphoserine). The residue at position 397 (serine 397) is a Phosphoserine; by MAP3K5. Serine 399 bears the Phosphoserine mark. Position 401 is a phosphoserine; by MAP3K5 (serine 401). Serine 413 is modified (phosphoserine). Positions 462 to 553 (KMGPVDKRKG…EVWRQQYQSS (92 aa)) constitute a PH domain. At serine 504 the chain carries Phosphoserine; by PKC/PRKCQ. Position 516 is a phosphothreonine; by autocatalysis (threonine 516). Serine 532 is modified (phosphoserine; by PKC/PRKCQ).

This sequence belongs to the protein kinase superfamily. AGC Ser/Thr protein kinase family. PDPK1 subfamily. As to quaternary structure, homodimer in its autoinhibited state. Active as monomer. Interacts with NPRL2, PPARG, PAK1, PTK2B, GRB14, PKN1 (via C-terminus), STRAP and IKKB. The Tyr-9 phosphorylated form interacts with SRC, RASA1 and CRK (via their SH2 domains). Interacts with SGK3 in a phosphorylation-dependent manner. The tyrosine-phosphorylated form interacts with PTPN6. The Ser-244 phosphorylated form interacts with YWHAH and YWHAQ. Binds INSR in response to insulin. Interacts (via PH domain) with SMAD3, SMAD4 and SMAD7. Interacts with PKN2; the interaction stimulates PDPK1 autophosphorylation, its PI(3,4,5)P3-dependent kinase activity toward 'Ser-473' of AKT1 but also activates its kinase activity toward PRKCD and PRKCZ. In terms of processing, phosphorylation on Ser-244 in the activation loop is required for full activity. PDPK1 itself can autophosphorylate Ser-244, leading to its own activation. Autophosphorylation is inhibited by the apoptotic C-terminus cleavage product of PKN2. Tyr-9 phosphorylation is critical for stabilization of both PDPK1 and the PDPK1/SRC complex via HSP90-mediated protection of PDPK1 degradation. Angiotensin II stimulates the tyrosine phosphorylation of PDPK1 in vascular smooth muscle in a calcium- and SRC-dependent manner. Phosphorylated on Tyr-9, Tyr-376 and Tyr-379 by INSR in response to insulin. Palmitate negatively regulates autophosphorylation at Ser-244 and palmitate-induced phosphorylation at Ser-532 and Ser-504 by PKC/PRKCQ negatively regulates its ability to phosphorylate PKB/AKT1. Phosphorylation at Thr-357 by MELK partially inhibits kinase activity, the inhibition is cooperatively enhanced by phosphorylation at Ser-397 and Ser-401 by MAP3K5. Post-translationally, monoubiquitinated in the kinase domain, deubiquitinated by USP4.

The protein localises to the cytoplasm. It localises to the nucleus. Its subcellular location is the cell membrane. It is found in the cell junction. The protein resides in the focal adhesion. It catalyses the reaction L-seryl-[protein] + ATP = O-phospho-L-seryl-[protein] + ADP + H(+). The catalysed reaction is L-threonyl-[protein] + ATP = O-phospho-L-threonyl-[protein] + ADP + H(+). With respect to regulation, homodimerization regulates its activity by maintaining the kinase in an autoinhibitory conformation. NPRL2 down-regulates its activity by interfering with tyrosine phosphorylation at the Tyr-9, Tyr-376 and Tyr-379 residues. The 14-3-3 protein YWHAQ acts as a negative regulator by association with the residues surrounding the Ser-244 residue. STRAP positively regulates its activity by enhancing its autophosphorylation and by stimulating its dissociation from YWHAQ. SMAD2, SMAD3, SMAD4 and SMAD7 also positively regulate its activity by stimulating its dissociation from YWHAQ. Activated by phosphorylation on Tyr-9, Tyr-376 and Tyr-379 by INSR in response to insulin. In terms of biological role, serine/threonine kinase which acts as a master kinase, phosphorylating and activating a subgroup of the AGC family of protein kinases. Its targets include: protein kinase B (PKB/AKT1, PKB/AKT2, PKB/AKT3), p70 ribosomal protein S6 kinase (RPS6KB1), p90 ribosomal protein S6 kinase (RPS6KA1, RPS6KA2 and RPS6KA3), cyclic AMP-dependent protein kinase (PRKACA), protein kinase C (PRKCD and PRKCZ), serum and glucocorticoid-inducible kinase (SGK1, SGK2 and SGK3), p21-activated kinase-1 (PAK1), TSSK3, protein kinase PKN (PKN1 and PKN2). Plays a central role in the transduction of signals from insulin by providing the activating phosphorylation to PKB/AKT1, thus propagating the signal to downstream targets controlling cell proliferation and survival, as well as glucose and amino acid uptake and storage. Negatively regulates the TGF-beta-induced signaling by: modulating the association of SMAD3 and SMAD7 with TGF-beta receptor, phosphorylating SMAD2, SMAD3, SMAD4 and SMAD7, preventing the nuclear translocation of SMAD3 and SMAD4 and the translocation of SMAD7 from the nucleus to the cytoplasm in response to TGF-beta. Activates PPARG transcriptional activity and promotes adipocyte differentiation. Activates the NF-kappa-B pathway via phosphorylation of IKKB. The tyrosine phosphorylated form is crucial for the regulation of focal adhesions by angiotensin II. Controls proliferation, survival, and growth of developing pancreatic cells. Participates in the regulation of Ca(2+) entry and Ca(2+)-activated K(+) channels of mast cells. Essential for the motility of vascular endothelial cells (ECs) and is involved in the regulation of their chemotaxis. Plays a critical role in cardiac homeostasis by serving as a dual effector for cell survival and beta-adrenergic response. Plays an important role during thymocyte development by regulating the expression of key nutrient receptors on the surface of pre-T cells and mediating Notch-induced cell growth and proliferative responses. Provides negative feedback inhibition to toll-like receptor-mediated NF-kappa-B activation in macrophages. In Rattus norvegicus (Rat), this protein is 3-phosphoinositide-dependent protein kinase 1 (Pdpk1).